The chain runs to 116 residues: Large ribosomal subunit protein uL18 (116 aa).

It belongs to the universal ribosomal protein uL18 family. As to quaternary structure, part of the 50S ribosomal subunit; part of the 5S rRNA/L5/L18/L25 subcomplex. Contacts the 5S and 23S rRNAs.

Its function is as follows. This is one of the proteins that bind and probably mediate the attachment of the 5S RNA into the large ribosomal subunit, where it forms part of the central protuberance. This Shewanella piezotolerans (strain WP3 / JCM 13877) protein is Large ribosomal subunit protein uL18.